We begin with the raw amino-acid sequence, 705 residues long: Translation initiation factor IF-2 (705 aa).

Residues 40-124 (DDQIKALDKK…QPAAPKEIPS (85 aa)) are disordered. Residues 41 to 58 (DQIKALDKKFKKEQKNDN) show a composition bias toward basic and acidic residues. Residues 59–77 (KQSTQNNHQKSNNQNQNKG) show a composition bias toward low complexity. A compositionally biased stretch (basic residues) spans 94–108 (KGNKKNNRNNKKNNK). Residues 207–376 (ERPAVVTIMG…GLVAEVQELK (170 aa)) form the tr-type G domain. The G1 stretch occupies residues 216 to 223 (GHVDHGKT). 216–223 (GHVDHGKT) provides a ligand contact to GTP. The tract at residues 241 to 245 (GITQH) is G2. The G3 stretch occupies residues 262–265 (DTPG). Residues 262-266 (DTPGH) and 316-319 (NKID) each bind GTP. Residues 316–319 (NKID) form a G4 region. Residues 352–354 (SAL) form a G5 region.

Belongs to the TRAFAC class translation factor GTPase superfamily. Classic translation factor GTPase family. IF-2 subfamily.

It localises to the cytoplasm. Functionally, one of the essential components for the initiation of protein synthesis. Protects formylmethionyl-tRNA from spontaneous hydrolysis and promotes its binding to the 30S ribosomal subunits. Also involved in the hydrolysis of GTP during the formation of the 70S ribosomal complex. The polypeptide is Translation initiation factor IF-2 (Staphylococcus aureus (strain USA300)).